The chain runs to 256 residues: Ubiquinone/menaquinone biosynthesis C-methyltransferase UbiE (256 aa).

A compositionally biased stretch (basic and acidic residues) spans 1-12; that stretch reads MNDQRKGEHAEP. The interval 1-21 is disordered; sequence MNDQRKGEHAEPTTHFGYQDV. Residues Thr-79, Asp-100, and 128-129 each bind S-adenosyl-L-methionine; that span reads DA.

This sequence belongs to the class I-like SAM-binding methyltransferase superfamily. MenG/UbiE family.

It carries out the reaction a 2-demethylmenaquinol + S-adenosyl-L-methionine = a menaquinol + S-adenosyl-L-homocysteine + H(+). It catalyses the reaction a 2-methoxy-6-(all-trans-polyprenyl)benzene-1,4-diol + S-adenosyl-L-methionine = a 5-methoxy-2-methyl-3-(all-trans-polyprenyl)benzene-1,4-diol + S-adenosyl-L-homocysteine + H(+). It participates in quinol/quinone metabolism; menaquinone biosynthesis; menaquinol from 1,4-dihydroxy-2-naphthoate: step 2/2. Its pathway is cofactor biosynthesis; ubiquinone biosynthesis. In terms of biological role, methyltransferase required for the conversion of demethylmenaquinol (DMKH2) to menaquinol (MKH2) and the conversion of 2-polyprenyl-6-methoxy-1,4-benzoquinol (DDMQH2) to 2-polyprenyl-3-methyl-6-methoxy-1,4-benzoquinol (DMQH2). The chain is Ubiquinone/menaquinone biosynthesis C-methyltransferase UbiE from Pseudomonas putida (strain W619).